We begin with the raw amino-acid sequence, 195 residues long: Protein GrpE (195 aa).

Belongs to the GrpE family. In terms of assembly, homodimer.

Its subcellular location is the cytoplasm. Participates actively in the response to hyperosmotic and heat shock by preventing the aggregation of stress-denatured proteins, in association with DnaK and GrpE. It is the nucleotide exchange factor for DnaK and may function as a thermosensor. Unfolded proteins bind initially to DnaJ; upon interaction with the DnaJ-bound protein, DnaK hydrolyzes its bound ATP, resulting in the formation of a stable complex. GrpE releases ADP from DnaK; ATP binding to DnaK triggers the release of the substrate protein, thus completing the reaction cycle. Several rounds of ATP-dependent interactions between DnaJ, DnaK and GrpE are required for fully efficient folding. The sequence is that of Protein GrpE from Francisella tularensis subsp. novicida (strain U112).